Reading from the N-terminus, the 448-residue chain is Protein chibby homolog 2 (448 aa).

8 positions are modified to phosphoserine: Ser-41, Ser-86, Ser-89, Ser-97, Ser-124, Ser-144, Ser-148, and Ser-150. The stretch at 164–198 (KECMLQEENKSLREENKALREENRMLSKENKILQV) forms a coiled coil. Residues Ser-212 and Ser-225 each carry the phosphoserine modification. Residues 242 to 267 (KEDSTLQLLREENRALQQLLEQKQAY) adopt a coiled-coil conformation. The segment at 270 to 323 (QAEDTAAPAEESKPAPSPHEEPCSPGLLQDQGSGLSSRFEEPKGPPARQEDSKE) is disordered. Composition is skewed to basic and acidic residues over residues 279–291 (EESKPAPSPHEEP) and 307–323 (RFEEPKGPPARQEDSKE). A phosphoserine mark is found at Ser-335 and Ser-338. Residues 356-414 (LQLLREMRQALQALLKENRLLQEENRTLQVLRAEHRGFQEENKALWENNKLKLQQKLVI) adopt a coiled-coil conformation.

Belongs to the chibby family. SPERT subfamily. As to quaternary structure, homodimer. Binds to NEK1. Testis-specific.

The sequence is that of Protein chibby homolog 2 from Homo sapiens (Human).